Reading from the N-terminus, the 489-residue chain is Long chain base biosynthesis protein 2d (489 aa).

A helical membrane pass occupies residues 4–24; sequence LPYVTALTTLFSYGLLFAFGQ. Residue Lys311 is modified to N6-(pyridoxal phosphate)lysine.

Belongs to the class-II pyridoxal-phosphate-dependent aminotransferase family. As to quaternary structure, heterodimer with LCB1. Component of the serine palmitoyltransferase (SPT) complex, composed of LCB1 and LCB2. Requires pyridoxal 5'-phosphate as cofactor.

The protein localises to the endoplasmic reticulum membrane. It catalyses the reaction L-serine + hexadecanoyl-CoA + H(+) = 3-oxosphinganine + CO2 + CoA. Its pathway is lipid metabolism; sphingolipid metabolism. In terms of biological role, serine palmitoyltransferase (SPT). The heterodimer formed with LCB1 constitutes the catalytic core. The chain is Long chain base biosynthesis protein 2d from Oryza sativa subsp. japonica (Rice).